A 294-amino-acid chain; its full sequence is Acetylglutamate kinase (294 aa).

Residues 63-64 (GG), R85, and N188 each bind substrate.

The protein belongs to the acetylglutamate kinase family. ArgB subfamily.

Its subcellular location is the cytoplasm. The catalysed reaction is N-acetyl-L-glutamate + ATP = N-acetyl-L-glutamyl 5-phosphate + ADP. It participates in amino-acid biosynthesis; L-arginine biosynthesis; N(2)-acetyl-L-ornithine from L-glutamate: step 2/4. Catalyzes the ATP-dependent phosphorylation of N-acetyl-L-glutamate. This chain is Acetylglutamate kinase, found in Methanococcus maripaludis (strain C6 / ATCC BAA-1332).